The primary structure comprises 1444 residues: DNA polymerase III PolC-type (1444 aa).

The 157-residue stretch at tyrosine 421 to leucine 577 folds into the Exonuclease domain.

It belongs to the DNA polymerase type-C family. PolC subfamily.

It localises to the cytoplasm. It catalyses the reaction DNA(n) + a 2'-deoxyribonucleoside 5'-triphosphate = DNA(n+1) + diphosphate. In terms of biological role, required for replicative DNA synthesis. This DNA polymerase also exhibits 3' to 5' exonuclease activity. The polypeptide is DNA polymerase III PolC-type (Lacticaseibacillus paracasei (strain ATCC 334 / BCRC 17002 / CCUG 31169 / CIP 107868 / KCTC 3260 / NRRL B-441) (Lactobacillus paracasei)).